We begin with the raw amino-acid sequence, 85 residues long: UPF0473 protein CLK_1946 (85 aa).

It belongs to the UPF0473 family.

The chain is UPF0473 protein CLK_1946 from Clostridium botulinum (strain Loch Maree / Type A3).